We begin with the raw amino-acid sequence, 514 residues long: ATP synthase subunit alpha (514 aa).

170 to 177 serves as a coordination point for ATP; it reads GDRQIGKT.

It belongs to the ATPase alpha/beta chains family. As to quaternary structure, F-type ATPases have 2 components, CF(1) - the catalytic core - and CF(0) - the membrane proton channel. CF(1) has five subunits: alpha(3), beta(3), gamma(1), delta(1), epsilon(1). CF(0) has three main subunits: a(1), b(2) and c(9-12). The alpha and beta chains form an alternating ring which encloses part of the gamma chain. CF(1) is attached to CF(0) by a central stalk formed by the gamma and epsilon chains, while a peripheral stalk is formed by the delta and b chains.

It is found in the cell inner membrane. The enzyme catalyses ATP + H2O + 4 H(+)(in) = ADP + phosphate + 5 H(+)(out). Its function is as follows. Produces ATP from ADP in the presence of a proton gradient across the membrane. The alpha chain is a regulatory subunit. The protein is ATP synthase subunit alpha of Stutzerimonas stutzeri (strain A1501) (Pseudomonas stutzeri).